Reading from the N-terminus, the 250-residue chain is High affinity immunoglobulin epsilon receptor subunit alpha (250 aa).

Residues 1–23 form the signal peptide; sequence MVTGRSAQLCLALLFMSLDVILT. The Extracellular segment spans residues 24–204; it reads ATEKSVLTLD…AYKCKYYWLQ (181 aa). One can recognise an Ig-like 1 domain in the interval 28–104; sequence SVLTLDPPWI…QGLFKSKPVY (77 aa). The cysteines at positions 49 and 92 are disulfide-linked. N-linked (GlcNAc...) asparagine glycosylation is found at Asn58, Asn66, Asn73, Asn106, Asn152, and Asn167. Residues 114–181 enclose the Ig-like 2 domain; sequence LQTSADMVLV…YHCKGYLRQV (68 aa). Cys131 and Cys174 are disulfide-bonded. Residues 205-223 form a helical membrane-spanning segment; it reads LIFPLLVAILFAVDTGLLL. The Cytoplasmic segment spans residues 224–250; that stretch reads STEEQFKSVLEIQKTGKYKKVETELLT.

As to quaternary structure, tetramer of an alpha chain, a beta chain, and two disulfide linked gamma chains. Interacts with IGHE (via CH3 region). As to expression, expressed in bone marrow mast cells, as well as in the pineal gland at night.

It is found in the cell membrane. High-affinity receptor for immunoglobulin epsilon/IgE. Mediates IgE effector functions in myeloid cells. Upon IgE binding and antigen/allergen cross-linking initiates signaling pathways that lead to myeloid cell activation and differentiation. On mast cells, basophils and eosinophils stimulates the secretion of vasoactive amines, lipid mediators and cytokines that contribute to inflammatory response, tissue remodeling and cytotoxicity against microbes. Triggers the immediate hypersensitivity response to allergens as a host defense mechanism against helminth parasites, pathogenic bacteria and venom toxicity. When dysregulated, it can elicit harmful life-threatening allergic and anaphylactic reactions. This chain is High affinity immunoglobulin epsilon receptor subunit alpha (Fcer1a), found in Mus musculus (Mouse).